A 141-amino-acid chain; its full sequence is Hemoglobin subunit alpha (141 aa).

Residues 1 to 141 form the Globin domain; sequence VLSPADKTNV…VSTVLTSKYR (141 aa). Ser3 bears the Phosphoserine mark. N6-succinyllysine is present on Lys7. Thr8 carries the post-translational modification Phosphothreonine. The residue at position 11 (Lys11) is an N6-succinyllysine. At Lys16 the chain carries N6-acetyllysine; alternate. Position 16 is an N6-succinyllysine; alternate (Lys16). Tyr24 bears the Phosphotyrosine mark. Phosphoserine is present on Ser35. An N6-succinyllysine modification is found at Lys40. His58 serves as a coordination point for O2. His87 contributes to the heme b binding site. Ser102 carries the phosphoserine modification. Thr108 is subject to Phosphothreonine. A phosphoserine mark is found at Ser124 and Ser131. Thr134 and Thr137 each carry phosphothreonine. Ser138 carries the phosphoserine modification.

It belongs to the globin family. As to quaternary structure, heterotetramer of two alpha chains and two beta chains. Red blood cells.

In terms of biological role, involved in oxygen transport from the lung to the various peripheral tissues. Functionally, hemopressin acts as an antagonist peptide of the cannabinoid receptor CNR1. Hemopressin-binding efficiently blocks cannabinoid receptor CNR1 and subsequent signaling. The chain is Hemoglobin subunit alpha (HBA) from Cynopterus sphinx (Indian short-nosed fruit bat).